The chain runs to 313 residues: Ribonuclease HIII (313 aa).

The RNase H type-2 domain occupies 98-313 (YNCIGSDEAG…REKALKLIKK (216 aa)). A divalent metal cation-binding residues include aspartate 104, glutamate 105, and aspartate 208.

Belongs to the RNase HII family. RnhC subfamily. Mn(2+) serves as cofactor. Mg(2+) is required as a cofactor.

It localises to the cytoplasm. The enzyme catalyses Endonucleolytic cleavage to 5'-phosphomonoester.. In terms of biological role, endonuclease that specifically degrades the RNA of RNA-DNA hybrids. The polypeptide is Ribonuclease HIII (Macrococcus caseolyticus (strain JCSC5402) (Macrococcoides caseolyticum)).